Here is a 117-residue protein sequence, read N- to C-terminus: Large ribosomal subunit protein uL22 (117 aa).

Belongs to the universal ribosomal protein uL22 family. As to quaternary structure, part of the 50S ribosomal subunit.

Its function is as follows. This protein binds specifically to 23S rRNA; its binding is stimulated by other ribosomal proteins, e.g. L4, L17, and L20. It is important during the early stages of 50S assembly. It makes multiple contacts with different domains of the 23S rRNA in the assembled 50S subunit and ribosome. Functionally, the globular domain of the protein is located near the polypeptide exit tunnel on the outside of the subunit, while an extended beta-hairpin is found that lines the wall of the exit tunnel in the center of the 70S ribosome. The sequence is that of Large ribosomal subunit protein uL22 from Latilactobacillus sakei subsp. sakei (strain 23K) (Lactobacillus sakei subsp. sakei).